The chain runs to 131 residues: Transcription antitermination protein NusB (131 aa).

This sequence belongs to the NusB family.

Involved in transcription antitermination. Required for transcription of ribosomal RNA (rRNA) genes. Binds specifically to the boxA antiterminator sequence of the ribosomal RNA (rrn) operons. This Campylobacter curvus (strain 525.92) protein is Transcription antitermination protein NusB.